A 41-amino-acid polypeptide reads, in one-letter code: Peroxidase 3 (41 aa).

It belongs to the peroxidase family. Classical plant (class III) peroxidase subfamily. Heme b serves as cofactor. Ca(2+) is required as a cofactor.

The protein resides in the secreted. The catalysed reaction is 2 a phenolic donor + H2O2 = 2 a phenolic radical donor + 2 H2O. Removal of H(2)O(2), oxidation of toxic reductants, biosynthesis and degradation of lignin, suberization, auxin catabolism, response to environmental stresses such as wounding, pathogen attack and oxidative stress. These functions might be dependent on each isozyme/isoform in each plant tissue. The polypeptide is Peroxidase 3 (Vitis vinifera (Grape)).